A 344-amino-acid chain; its full sequence is Olfactory receptor class A-like protein 4 (344 aa).

At 1 to 10 (MSEVLTVDAV) the chain is on the extracellular side. The helical transmembrane segment at 11-31 (LFGLLVFSGIIGNIMVIYVVF) threads the bilayer. The Cytoplasmic segment spans residues 32–47 (DCAKLCASRHLPPSDT). A helical membrane pass occupies residues 48 to 68 (ILVHLCLANLLTSVFRTVPIF). At 69 to 84 (VSDLGLQVWLTAGWCR) the chain is on the extracellular side. A disulfide bridge links Cys-83 with Cys-169. A helical transmembrane segment spans residues 85-105 (VFMLLWVWWRAVGCWVTLALS). Residues 106 to 130 (AFHCATLRRQHVSMGPLGHSRERRR) lie on the Cytoplasmic side of the membrane. The helical transmembrane segment at 131–151 (VWVVLAVVWAANLLFSLPALV) threads the bilayer. Residues 152–186 (YTTQVRGNATVELMVISCTTRPLLGCVWEFPTFQQ) are Extracellular-facing. The N-linked (GlcNAc...) asparagine glycan is linked to Asn-159. A helical transmembrane segment spans residues 187 to 207 (GYAFASSSLALNEVLPLVLMV). Over 208–246 (GTNLATLQALGKHIRTVRAGGSTGAELDRHVSSERKAGH) the chain is Cytoplasmic. Residues 247–267 (VIMALVALFVGCWVLQVAAVT) traverse the membrane as a helical segment. At 268-279 (YYNHNRGAHAEG) the chain is on the extracellular side. Residues 280 to 300 (LLTVAHFSASLFVGFSPLVVA) traverse the membrane as a helical segment. Residues 301–344 (LGHGKLRRRISGILQSCMHRLKQTQDKPAEITEKDGRTTQSAMK) lie on the Cytoplasmic side of the membrane. The segment covering 324 to 337 (TQDKPAEITEKDGR) has biased composition (basic and acidic residues). Positions 324–344 (TQDKPAEITEKDGRTTQSAMK) are disordered.

It belongs to the G-protein coupled receptor 1 family. Highly expressed in the olfactory rosette. Specifically localizes to crypt neurons in the olfactory neuroepithelium. Colocalizes with the inhibitory G-protein gnaia in crypt neurons. Not detected in other tissues tested.

It is found in the cell membrane. Probable olfactory receptor. The sequence is that of Olfactory receptor class A-like protein 4 (ora4) from Danio rerio (Zebrafish).